The following is a 519-amino-acid chain: O-fucosyltransferase 31 (519 aa).

The helical; Signal-anchor for type II membrane protein transmembrane segment at 18–38 (ALAGVFVLLFPILYPNLFSPL) threads the bilayer. The N-linked (GlcNAc...) asparagine glycan is linked to Asn131. Substrate is bound at residue 302–304 (HLR). N-linked (GlcNAc...) asparagine glycosylation is found at Asn373 and Asn474.

The protein belongs to the glycosyltransferase GT106 family.

The protein localises to the membrane. It functions in the pathway glycan metabolism. The chain is O-fucosyltransferase 31 from Arabidopsis thaliana (Mouse-ear cress).